The sequence spans 121 residues: Met-lysine-1a (121 aa).

Positions 1–22 (MKSFVFALALIVAFACISESKS) are cleaved as a signal peptide. The propeptide occupies 23 to 69 (DHTGYEEEENLEDSELTDLVTAALLEELAEASEMDDLSYTEEAGGER). Met120 bears the Methionine amide mark.

In terms of tissue distribution, expressed by the venom gland.

It is found in the secreted. Its function is as follows. Shows no antimicrobial activity against Gram-positive bacterium B.subtilis B-501 or Gram-negative bacterium E.coli DH5-alpha at concentrations up to 20 ug/ml. Shows no toxicity towards insect (S.carnaria) larvae. The polypeptide is Met-lysine-1a (Lachesana tarabaevi (Spider)).